A 294-amino-acid polypeptide reads, in one-letter code: Proteasome subunit beta (294 aa).

A propeptide spans 1–65 (MTADRPALRT…MESGDLAPHG (65 aa)) (removed in mature form; by autocatalysis). Residue Thr66 is the Nucleophile of the active site.

This sequence belongs to the peptidase T1B family. As to quaternary structure, the 20S proteasome core is composed of 14 alpha and 14 beta subunits that assemble into four stacked heptameric rings, resulting in a barrel-shaped structure. The two inner rings, each composed of seven catalytic beta subunits, are sandwiched by two outer rings, each composed of seven alpha subunits. The catalytic chamber with the active sites is on the inside of the barrel. Has a gated structure, the ends of the cylinder being occluded by the N-termini of the alpha-subunits. Is capped by the proteasome-associated ATPase, ARC.

The protein localises to the cytoplasm. It carries out the reaction Cleavage of peptide bonds with very broad specificity.. It participates in protein degradation; proteasomal Pup-dependent pathway. Its activity is regulated as follows. The formation of the proteasomal ATPase ARC-20S proteasome complex, likely via the docking of the C-termini of ARC into the intersubunit pockets in the alpha-rings, may trigger opening of the gate for substrate entry. Interconversion between the open-gate and close-gate conformations leads to a dynamic regulation of the 20S proteasome proteolysis activity. In terms of biological role, component of the proteasome core, a large protease complex with broad specificity involved in protein degradation. The sequence is that of Proteasome subunit beta from Rhodococcus opacus (strain B4).